We begin with the raw amino-acid sequence, 425 residues long: Glutamyl-tRNA reductase (425 aa).

Residues 49 to 52 (TCNR), S107, 112 to 114 (EPQ), and Q118 contribute to the substrate site. Catalysis depends on C50, which acts as the Nucleophile. 187–192 (GAGETI) is a binding site for NADP(+).

This sequence belongs to the glutamyl-tRNA reductase family. Homodimer.

It catalyses the reaction (S)-4-amino-5-oxopentanoate + tRNA(Glu) + NADP(+) = L-glutamyl-tRNA(Glu) + NADPH + H(+). The protein operates within porphyrin-containing compound metabolism; protoporphyrin-IX biosynthesis; 5-aminolevulinate from L-glutamyl-tRNA(Glu): step 1/2. Functionally, catalyzes the NADPH-dependent reduction of glutamyl-tRNA(Glu) to glutamate 1-semialdehyde (GSA). The polypeptide is Glutamyl-tRNA reductase (Pseudomonas syringae pv. tomato (strain ATCC BAA-871 / DC3000)).